A 490-amino-acid polypeptide reads, in one-letter code: Tryptophan decarboxylase (490 aa).

The residue at position 306 (Lys306) is an N6-(pyridoxal phosphate)lysine.

It belongs to the group II decarboxylase family. As to quaternary structure, homodimer. It depends on pyridoxal 5'-phosphate as a cofactor.

The protein localises to the cytoplasm. It carries out the reaction L-tryptophan + H(+) = tryptamine + CO2. With respect to regulation, inhibited by (S)-alpha-fluoromethyltryptophan. In terms of biological role, catalyzes the decarboxylation of tryptophan to tryptamine. Tryptamine is a neurotransmitter that induces the release of serotonin, which is suggested to modulate gastrointestinal motility. Therefore, the tryptophan decarboxylase from the gut bacteria Ruminococcus gnavus (strain ATCC 29149 / VPI C7-9) may influence host brain and behavior. Has weak activity with tyrosine and phenylalanine. This is Tryptophan decarboxylase from Mediterraneibacter gnavus (strain ATCC 29149 / DSM 114966 / JCM 6515 / VPI C7-9) (Ruminococcus gnavus).